The chain runs to 227 residues: Eukaryotic translation initiation factor NCBP (227 aa).

Basic and acidic residues predominate over residues 1–22 (MEPAAEKREAEQEELQQQHDEP). The segment at 1–43 (MEPAAEKREAEQEELQQQHDEPAVPSADDDEAEAEENERRNRE) is disordered. Residues 27 to 36 (ADDDEAEAEE) show a composition bias toward acidic residues.

This sequence belongs to the eukaryotic initiation factor 4E family. In terms of assembly, EIF4F is a multi-subunit complex, the composition of which varies with external and internal environmental conditions. It is composed of at least EIF4A, EIF4E and EIF4G. EIF4E is also known to interact with other partners. In higher plants two isoforms of EIF4F have been identified, named isoform EIF4F and isoform EIF(iso)4F. Isoform EIF4F has subunits p220 and p26, whereas isoform EIF(iso)4F has subunits p82 and p28.

In terms of biological role, recognizes and binds the 7-methylguanosine-containing mRNA cap during an early step in the initiation of protein synthesis and facilitates ribosome binding by inducing the unwinding of the mRNAs secondary structures. The sequence is that of Eukaryotic translation initiation factor NCBP (NCBP) from Oryza sativa subsp. japonica (Rice).